Here is a 247-residue protein sequence, read N- to C-terminus: Eukaryotic translation initiation factor 6 (247 aa).

Phosphoserine; by CK1 is present on residues Ser-174 and Ser-175.

It belongs to the eIF-6 family. As to quaternary structure, monomer. Associates with the 60S ribosomal subunit. In terms of processing, phosphorylation at Ser-174 and Ser-175 promotes nuclear export.

Its subcellular location is the cytoplasm. It localises to the nucleus. It is found in the nucleolus. In terms of biological role, binds to the 60S ribosomal subunit and prevents its association with the 40S ribosomal subunit to form the 80S initiation complex in the cytoplasm. Is also involved in ribosome biogenesis. Associates with pre-60S subunits in the nucleus and is involved in its nuclear export. The polypeptide is Eukaryotic translation initiation factor 6 (tif6) (Emericella nidulans (strain FGSC A4 / ATCC 38163 / CBS 112.46 / NRRL 194 / M139) (Aspergillus nidulans)).